Here is a 452-residue protein sequence, read N- to C-terminus: MAVSARLRTTAEDTSIAKSTQDPIGDTEISVANAKGSSDSNIKNSPGGNSVGQESELEHVPEEDDSGDKEADHEDSETATAKKRKAQPLKNPKKSLKRGRVPAPLNLSDSNTNTHGGNIKDGNLASSNSAHFPPVANQNVKSAPAQVTQHSKFQPRVQYLGKASSRQSIQVNNSSNSYGKPHMPSAGIMSAMNPYMPMNRYIMSPYYNPYGIPPPHMLNKPIMTPYVSYPYPMGPRTSIPYAMQGGNARPYEENEYSASNYRNKRVNDSYDSPLSGTASTGKTRRSEEGSRNSSVGSSANAGPTQQRADLRPADMIPAEEYHFERDALLSANTKARSASTSTSTSTSTNRDRSSWHEAEPNKDEEEGTDLAIEDGAVPTPTFTTFQRTSQPQQQSPSLLQGEIRLSSHIFAFEFPLSSSNVDKKMFMSICNKVWNESKELTKKSSSHHRTGK.

Disordered stretches follow at residues 1–145 (MAVS…SAPA) and 262–311 (RNKR…ADLR). Polar residues-rich tracts occupy residues 12 to 22 (EDTSIAKSTQD) and 35 to 53 (KGSSDSNIKNSPGGNSVGQ). A Phosphoserine modification is found at serine 45. Positions 61–77 (PEEDDSGDKEADHEDSE) are enriched in acidic residues. Over residues 81 to 100 (AKKRKAQPLKNPKKSLKRGR) the composition is skewed to basic residues. Composition is skewed to polar residues over residues 107–116 (LSDSNTNTHG), 124–145 (LASSNSAHFPPVANQNVKSAPA), 269–281 (SYDSPLSGTASTG), and 291–307 (RNSSVGSSANAGPTQQR). Serine 126, serine 142, serine 272, and serine 275 each carry phosphoserine. Positions 212-452 (IPPPHMLNKP…KSSSHHRTGK (241 aa)) are interaction with FUS3 and KSS1. Residue serine 330 is modified to Phosphoserine. The segment covering 331-348 (ANTKARSASTSTSTSTST) has biased composition (low complexity). The disordered stretch occupies residues 331-395 (ANTKARSAST…QRTSQPQQQS (65 aa)). Residues 349–361 (NRDRSSWHEAEPN) show a composition bias toward basic and acidic residues. A compositionally biased stretch (acidic residues) spans 362–372 (KDEEEGTDLAI). Over residues 378-395 (PTPTFTTFQRTSQPQQQS) the composition is skewed to low complexity. Phosphothreonine is present on threonine 379. Phosphoserine is present on residues serine 395 and serine 428.

In terms of assembly, forms a complex with DIG2, STE12 and either FUS3 or KSS1. The interaction of FUS3 with STE12 depends on the presence of both DIG1 and DIG2. STE12 is lost from FUS3/DIG1/DIG2 complex after pheromone treatment. DIG1 and DIG2 have also been reported to interact with CLN1 and CLN2. In terms of processing, phosphorylated by FUS3 and KSS1, in a pheromone-stimulated manner. Phosphorylation reduces the affinity for STE12.

It is found in the nucleus. Its function is as follows. DIG1 and DIG2 are negative regulators of the filamentation and pheromone induced mating program. DIG1 and DIG2 inhibit the transcriptional activity of STE12 by direct protein-protein interaction. DIG1 colocalizes to promoters with STE12 and redistributes with it during induction of filamentation (by butanol) or mating (by pheromone) to program specific genes, but binding of DIG1 to STE12 is reduced by pheromone treatment. This Saccharomyces cerevisiae (strain ATCC 204508 / S288c) (Baker's yeast) protein is Down-regulator of invasive growth 1 (DIG1).